The sequence spans 208 residues: Protein-L-isoaspartate O-methyltransferase (208 aa).

Residue serine 59 is part of the active site.

This sequence belongs to the methyltransferase superfamily. L-isoaspartyl/D-aspartyl protein methyltransferase family.

It is found in the cytoplasm. It carries out the reaction [protein]-L-isoaspartate + S-adenosyl-L-methionine = [protein]-L-isoaspartate alpha-methyl ester + S-adenosyl-L-homocysteine. Functionally, catalyzes the methyl esterification of L-isoaspartyl residues in peptides and proteins that result from spontaneous decomposition of normal L-aspartyl and L-asparaginyl residues. It plays a role in the repair and/or degradation of damaged proteins. This is Protein-L-isoaspartate O-methyltransferase from Aliivibrio fischeri (strain MJ11) (Vibrio fischeri).